The primary structure comprises 361 residues: Phosphoserine aminotransferase (361 aa).

Arg42 is a binding site for L-glutamate. Pyridoxal 5'-phosphate-binding positions include 76-77 (GR), Trp102, Thr154, Asp173, and Gln196. Lys197 bears the N6-(pyridoxal phosphate)lysine mark. Position 238 to 239 (238 to 239 (NT)) interacts with pyridoxal 5'-phosphate.

The protein belongs to the class-V pyridoxal-phosphate-dependent aminotransferase family. SerC subfamily. In terms of assembly, homodimer. Pyridoxal 5'-phosphate is required as a cofactor.

The protein resides in the cytoplasm. The catalysed reaction is O-phospho-L-serine + 2-oxoglutarate = 3-phosphooxypyruvate + L-glutamate. It carries out the reaction 4-(phosphooxy)-L-threonine + 2-oxoglutarate = (R)-3-hydroxy-2-oxo-4-phosphooxybutanoate + L-glutamate. The protein operates within amino-acid biosynthesis; L-serine biosynthesis; L-serine from 3-phospho-D-glycerate: step 2/3. It functions in the pathway cofactor biosynthesis; pyridoxine 5'-phosphate biosynthesis; pyridoxine 5'-phosphate from D-erythrose 4-phosphate: step 3/5. Its function is as follows. Catalyzes the reversible conversion of 3-phosphohydroxypyruvate to phosphoserine and of 3-hydroxy-2-oxo-4-phosphonooxybutanoate to phosphohydroxythreonine. The polypeptide is Phosphoserine aminotransferase (Idiomarina loihiensis (strain ATCC BAA-735 / DSM 15497 / L2-TR)).